We begin with the raw amino-acid sequence, 257 residues long: MEKEIFYDSDGAKIRAFLATPENPKLAVIVIHEIWGLNDNIKDISRRLANEGYMALAPQLYTRNEDVLNEGNIQNVMMKVWSIPPEKRNDPNSYQQIMSALDEKGKKVAELLVLNRQKTEEQMIKDAIKAYEYVSSQGVKKIVSMGFCMGGGLAFQLATEVPLDGTIVFYGRNPQPLEAIQKIKGPILGLYAGEDPPIDAGLPDLISAIIKYKKDLELKIYPGAYHAFFNDRGRSYNKEAAEDAWERVKSFLRRVSK.

Active-site residues include Cys-148, Asp-195, and His-226.

It belongs to the dienelactone hydrolase family.

It catalyses the reaction 2-(5-oxo-2,5-dihydrofuran-2-ylidene)acetate + H2O = 4-oxohex-2-enedioate + H(+). The chain is Putative carboxymethylenebutenolidase from Saccharolobus solfataricus (strain ATCC 35092 / DSM 1617 / JCM 11322 / P2) (Sulfolobus solfataricus).